Consider the following 136-residue polypeptide: NLP effector protein 13 (136 aa).

A Conserved undecapeptide motif I motif is present at residues 1–9; it reads MYSWYFPKD. A Hepta-peptide GHRHDWE motif II motif is present at residues 16–22; it reads GHRHDWE.

Belongs to the Necrosis inducing protein (NPP1) family.

It localises to the secreted. Its function is as follows. Secreted effector that contributes moderately to virulence during infection by P.capsici. Causes only small yellow areas at 3 days after inoculation of host C.annuum leaves; these areas expand somewhat and became necrotic at 7 days after inoculation. Leads only to chlorotic areas, without necrosis at 7 days after non-host N.benthamiana leaves infection. The sequence is that of NLP effector protein 13 from Phytophthora capsici.